An 84-amino-acid polypeptide reads, in one-letter code: MHLYLLLGALAVFSLVYDKKENGIVFYFLILVLVFVLISPAFISKNTESAANDLPSHKAKSVRKKLEIEQALDAILNKNTSSLD.

This is an uncharacterized protein from Orgyia pseudotsugata (Douglas-fir tussock moth).